The sequence spans 80 residues: uncharacterized protein (80 aa).

The N-terminal stretch at 1 to 23 (MKWNNMLKAAGIAVLLFSVFAYA) is a signal peptide.

This is an uncharacterized protein from Bacillus subtilis (strain 168).